The chain runs to 178 residues: uncharacterized protein (178 aa).

Belongs to the mycobacterial PPE family.

This is an uncharacterized protein from Mycobacterium tuberculosis (strain CDC 1551 / Oshkosh).